The chain runs to 351 residues: Calcium uniporter protein, mitochondrial (351 aa).

Residues 1–50 (MAAAAGRSLLLLLSSRGGGGGGAGGCGALTAGCFPGLGVSRHRQQQHHRT) constitute a mitochondrion transit peptide. Over 51–233 (VHQRIASWQN…ISRKAEKRTT (183 aa)) the chain is Mitochondrial matrix. Phosphoserine; by CaMK2 is present on residues Ser57 and Ser92. The segment at 75-165 (VTVVYQNGLP…LTYHVRPPKR (91 aa)) is N-terminal MCU domain. Cys97 carries the post-translational modification S-glutathionyl cysteine. Positions 192–223 (IEQHQLNKERELIERLEDLKEQLAPLEKVRIE) form a coiled coil. The helical transmembrane segment at 234–255 (LVLWGGLAYMATQFGILARLTW) threads the bilayer. At 256–262 (WEYSWDI) the chain is on the mitochondrial intermembrane side. Residues 260 to 268 (WDIMEPVTY) carry the Selectivity filter motif. A helical transmembrane segment spans residues 263 to 284 (MEPVTYFITYGSAMAMYAYFVM). Glu264 lines the Ca(2+) pocket. A juxtamembrane helix region spans residues 285 to 290 (TRQEYV). At 285–351 (TRQEYVYPEA…LPLRQIGEKD (67 aa)) the chain is on the mitochondrial matrix side. Positions 311-339 (RFDLEKYNQLKDAIAQAEMDLKRLRDPLQ) form a coiled coil. Lys332 is subject to N6-acetyllysine.

This sequence belongs to the MCU (TC 1.A.77) family. As to quaternary structure, homotetramer. Component of the uniplex complex, composed of MCU, EMRE/SMDT1, MICU1 and MICU2 (or MICU3) in a 4:4:1:1 stoichiometry. Interacts with CCDC109B/MCUB; this inhibits channel activity. Interacts with MCUR1. Interactions with MICU1 and MCUR1 are mutually exclusive. Interacts with SLC25A23. In terms of processing, phosphorylation by CaMK2 in heart leads to increased MCU current. The regulation of MCU by CaMK2 is however subject to discussion: another group was unable to reproduce these results. Phosphorylated on tyrosines by PTK2B/PYK2, promoting oligomerization. Post-translationally, glutathionylation at Cys-97 in response to reactive oxygen species (ROS) promotes MCU higher-order assembly, leading to constitutive activation of the MCU channel and mitochondrial calcium overload. Undergoes proteolytic degradation by SPG7.

Its subcellular location is the mitochondrion inner membrane. The enzyme catalyses Ca(2+)(in) = Ca(2+)(out). MCU channel activity is regulated by the heterodimer composed of MICU1 and either MICU2 or MICU3, which act as calcium-sensors. At low calcium levels, MICU1 occludes the pore of the MCU channel, preventing mitochondrial calcium uptake. At higher calcium levels, calcium-binding to MICU1 and MICU2 (or MICU3) induces a conformational change that weakens MCU-MICU1 interactions and moves the MICU1-MICU2 heterodimer away from the pore, allowing calcium permeation through the channel. MCU channel activity is gated by EMRE/SMDT1 via the juxtamembrane helix loop. Inhibited by ruthenium red or its derivative Ru360. In terms of biological role, channel-forming and calcium-conducting subunit of the mitochondrial inner membrane calcium uniporter complex (uniplex), which mediates calcium uptake into the mitochondrial matrix. MCU channel activity is regulated by the calcium-sensor subunits of the uniplex MICU1 and MICU2 (or MICU3). Mitochondrial calcium homeostasis plays key roles in cellular physiology and regulates ATP production, cytoplasmic calcium signals and activation of cell death pathways. Involved in buffering the amplitude of systolic calcium rises in cardiomyocytes. While dispensable for baseline homeostatic cardiac function, acts as a key regulator of short-term mitochondrial calcium loading underlying a 'fight-or-flight' response during acute stress: acts by mediating a rapid increase of mitochondrial calcium in pacemaker cells. Participates in mitochondrial permeability transition during ischemia-reperfusion injury. Mitochondrial calcium uptake in skeletal muscle cells is involved in muscle size in adults. Regulates synaptic vesicle endocytosis kinetics in central nerve terminal. Regulates glucose-dependent insulin secretion in pancreatic beta-cells by regulating mitochondrial calcium uptake. Involved in antigen processing and presentation. This chain is Calcium uniporter protein, mitochondrial, found in Homo sapiens (Human).